An 867-amino-acid polypeptide reads, in one-letter code: Zinc finger protein zfp-1 (867 aa).

A PHD-type 1 zinc finger spans residues 5–57 (VGGCCVCADENGWTDNPLIYCDGENCEVAVHQGCYGIQEVPEGEWFCAKCTKA). A C2HC pre-PHD-type 2 zinc finger spans residues 69–102 (TFCCQLCPFDYGALKKTDRNGWAHVICALYIPEV). The extended PHD2 domain (ePHD2) stretch occupies residues 69-186 (TFCCQLCPFD…KYCGYCENHL (118 aa)). Residues 125-186 (KLCYICNEER…KYCGYCENHL (62 aa)) form a PHD-type 2 zinc finger. Disordered stretches follow at residues 267-311 (GSTV…SLSS), 440-477 (KNDM…GKSP), 503-586 (ADRT…QSNR), and 753-773 (SSGA…STAG). Positions 285–311 (PLTTSSRSSVAQDPSPPLTINKNSLSS) are enriched in polar residues. Residues 503–512 (ADRTAAERRA) are compositionally biased toward basic and acidic residues. The segment covering 516-527 (QSQPSTSTNGGP) has biased composition (polar residues). Low complexity predominate over residues 538-550 (HTNSTNSTNHQNN). Over residues 551-573 (GLTQNAPASTSMQAGTSSNDGVI) the composition is skewed to polar residues. The span at 574-585 (SQNGTSSTSQSN) shows a compositional bias: low complexity. Over residues 758 to 771 (VNSNIQNHRATPST) the composition is skewed to polar residues.

In terms of assembly, multimer; in vitro. Interacts (via C-terminus) with dot-1.1 to form a heterodimer known as the zfp-1-dot-1.1 complex or DotCom complex. Isoform a: Expressed at high levels in maturing oocytes, but at low levels in the rest of the germ line (at protein level). Isoform a: Not expressed in the pharynx, germ line and tail. Isoform c: Not expressed in the germ line (at protein level). Isoform c: Uniformly expressed.

The protein resides in the nucleus. It localises to the chromosome. Recruits the histone methyltransferase dot-1.1 to chromatin to methylate 'Lys-79' of histone H3 and activate transcription. Recognizes and binds histone H3 methylated at 'Lys-4' (H3K4me) at the promoters of target genes. During stress, the zfp-1-dot-1.1 complex also plays a role in the deubiquitination of histone H2B sites, which negatively modulates the RNA polymerase II-induced transcription of highly expressed genes. In response to stress, binds to the pdk-1 promoter to negatively regulate pdk-1 expression, which negatively modulates daf-16/FOXO-mediated gene expression. Thus, most likely via this mechanism, in response to stress, it confers a protective role against neuronal necrosis. Plays a role in Insulin/IGF-1-like signaling (IIS)- and diet restriction-mediated lifespan extension by controlling daf-16/FOXO and pha-4/FOXA recruitment to target promoters. May negatively regulate the expression of genes required for vulval development. May play a role in axon guidance in D-type motor neurons. May suppress sensitivity to RNAi. Its function is as follows. Required for migration of HSN motor neurons during embryogenesis. This chain is Zinc finger protein zfp-1, found in Caenorhabditis elegans.